The following is a 469-amino-acid chain: Uronate isomerase (469 aa).

The protein belongs to the metallo-dependent hydrolases superfamily. Uronate isomerase family.

It carries out the reaction D-glucuronate = D-fructuronate. The catalysed reaction is aldehydo-D-galacturonate = keto-D-tagaturonate. Its pathway is carbohydrate metabolism; pentose and glucuronate interconversion. The polypeptide is Uronate isomerase (Rhizobium meliloti (strain 1021) (Ensifer meliloti)).